Reading from the N-terminus, the 163-residue chain is MAYSIPTPSQLVYFTENYADYIPFVNRLINARSNSFQTQSGRDELREILIKSQVSVVSPISRFPAEPAYYIYLRDPSISTVYTALLQSTDTRNRVIEVENSTNVTTAEQLNAVRRTDDASTAIHNNLEQLLSLLTNGTGVFNRTSFESASGLTWLVTTTPRTA.

Alanine 2 is subject to N-acetylalanine; by host.

This sequence belongs to the virgaviridae capsid protein family.

The protein resides in the virion. Its function is as follows. Capsid protein self-assembles to form rod-shaped virions about 18 nm in diameter with a central canal enclosing the viral genomic RNA. In Sunn-hemp mosaic virus (SHMV), this protein is Capsid protein (CP).